The sequence spans 395 residues: Bone morphogenetic protein 2 (395 aa).

The N-terminal stretch at 1 to 23 (MVAGTRCLLALLLPQVLLGGAAG) is a signal peptide. Positions 24–281 (LIPELGRRKF…GHPLHRREKR (258 aa)) are cleaved as a propeptide — cleaved by PCSK5. A Phosphoserine modification is found at S86. N-linked (GlcNAc...) asparagine glycosylation is found at N134 and N199. The tract at residues 270-292 (GKGHPLHRREKRQAKHKQRKRLK) is disordered. The segment covering 273 to 292 (HPLHRREKRQAKHKQRKRLK) has biased composition (basic residues). Cystine bridges form between C295/C360, C324/C392, and C328/C394. N337 is a glycosylation site (N-linked (GlcNAc...) asparagine).

The protein belongs to the TGF-beta family. Homodimer; disulfide-linked. Interacts with SOSTDC1. Interacts with GREM2, RGMA, RGMB and RGMC. Interacts with ASPN. Interacts with MAFP5. Interacts with FBN1 (via N-terminal domain) and FBN2. Interacts with type I receptor BMPR1A. Interacts with type II receptor BMPR2. Interacts with SCUBE3. Interacts with TNFAIP6 (primarily via Link domain); this interaction is inhibited by hyaluronan. Interacts with ERFE. Interacts with BMPR1A/ALK3; the interaction may induce HAMP expression. Forms heterodimers with BMP6 in vitro; the heterodimer then binds to its receptor BMPR1A /ALK3 and may induce HAMP expression. Interacts with TGFBR3.

It localises to the secreted. Its function is as follows. Growth factor of the TGF-beta superfamily that plays essential roles in many developmental processes, including cardiogenesis, neurogenesis, and osteogenesis. Induces cartilage and bone formation. Initiates the canonical BMP signaling cascade by associating with type I receptor BMPR1A and type II receptor BMPR2. Once all three components are bound together in a complex at the cell surface, BMPR2 phosphorylates and activates BMPR1A. In turn, BMPR1A propagates signal by phosphorylating SMAD1/5/8 that travel to the nucleus and act as activators and repressors of transcription of target genes. Also acts to promote expression of HAMP, via the interaction with its receptor BMPR1A/ALK3. Can also signal through non-canonical pathways such as ERK/MAP kinase signaling cascade that regulates osteoblast differentiation. Also stimulates the differentiation of myoblasts into osteoblasts via the EIF2AK3-EIF2A-ATF4 pathway by stimulating EIF2A phosphorylation which leads to increased expression of ATF4 which plays a central role in osteoblast differentiation. Acts as a positive regulator of odontoblast differentiation during mesenchymal tooth germ formation, expression is repressed during the bell stage by MSX1-mediated inhibition of CTNNB1 signaling. In Oryctolagus cuniculus (Rabbit), this protein is Bone morphogenetic protein 2 (BMP2).